The following is a 273-amino-acid chain: Chondrolectin (273 aa).

Residues 1-21 (MIRIASLLLGAALLCAQGAFA) form the signal peptide. Over 22 to 216 (RRVVSGQKVC…VVTEAGIIPN (195 aa)) the chain is Extracellular. In terms of domain architecture, C-type lectin spans 35–179 (VKHPCYKMAY…CNMKHNYICK (145 aa)). 2 disulfides stabilise this stretch: Cys61/Cys178 and Cys144/Cys170. Asn86 carries N-linked (GlcNAc...) asparagine glycosylation. The chain crosses the membrane as a helical span at residues 217-237 (LIYVIIPTIPLLLLILVALGT). Over 238–273 (CCFQMLHKSKGRSKTSPNQSTLWISKSTRKESGMEV) the chain is Cytoplasmic. The disordered stretch occupies residues 247-273 (KGRSKTSPNQSTLWISKSTRKESGMEV). Positions 251 to 263 (KTSPNQSTLWISK) are enriched in polar residues.

In terms of assembly, interacts with RABGGTB. In adult mice preferentially expressed in skeletal muscle, testis, brain, and lung. Expressed in striated muscle (at protein level). Expressed in spinal cord. Detected in spinal cord fast motor neurons (at protein level).

Its subcellular location is the membrane. In terms of biological role, may play a role in the development of the nervous system such as in neurite outgrowth and elongation. May be involved in motor axon growth and guidance. This chain is Chondrolectin (Chodl), found in Mus musculus (Mouse).